Reading from the N-terminus, the 457-residue chain is ERV-H1 provirus ancestral Env polyprotein (457 aa).

The N-terminal stretch at 1–35 is a signal peptide; the sequence is MIFAGKAPSNTSTLMKFYSLILYSLLFSFPFLCHP. N-linked (GlcNAc...) asparagine glycosylation is found at asparagine 10 and asparagine 47. A CXXC motif is present at residues 64–67; it reads CWLC. 6 N-linked (GlcNAc...) asparagine glycosylation sites follow: asparagine 197, asparagine 222, asparagine 265, asparagine 283, asparagine 352, and asparagine 370. The interval 388-408 is fusion peptide; the sequence is VIPLIPLMFGLGLSASTIALS.

It belongs to the gamma type-C retroviral envelope protein family. HERV class-I H env subfamily. The surface (SU) and transmembrane (TM) proteins form a heterodimer. SU and TM are attached by noncovalent interactions or by a labile interchain disulfide bond. Specific enzymatic cleavages in vivo yield the mature SU and TM proteins. In terms of processing, the CXXC motif is highly conserved across a broad range of retroviral envelope proteins. It is thought to participate in the formation of a labile disulfide bond possibly with the CX6CC motif present in the transmembrane protein.

The protein resides in the virion. Functionally, retroviral envelope proteins mediate receptor recognition and membrane fusion during early infection. Endogenous envelope proteins may have kept, lost or modified their original function during evolution. SU mediates receptor recognition. In terms of biological role, TM anchors the envelope heterodimer to the viral membrane through one transmembrane domain. The other hydrophobic domain, called fusion peptide, mediates fusion of the viral membrane with the target cell membrane. In Pan troglodytes (Chimpanzee), this protein is ERV-H1 provirus ancestral Env polyprotein.